The primary structure comprises 577 residues: Proline--tRNA ligase (577 aa).

Belongs to the class-II aminoacyl-tRNA synthetase family. ProS type 1 subfamily. In terms of assembly, homodimer.

It localises to the cytoplasm. The enzyme catalyses tRNA(Pro) + L-proline + ATP = L-prolyl-tRNA(Pro) + AMP + diphosphate. Functionally, catalyzes the attachment of proline to tRNA(Pro) in a two-step reaction: proline is first activated by ATP to form Pro-AMP and then transferred to the acceptor end of tRNA(Pro). As ProRS can inadvertently accommodate and process non-cognate amino acids such as alanine and cysteine, to avoid such errors it has two additional distinct editing activities against alanine. One activity is designated as 'pretransfer' editing and involves the tRNA(Pro)-independent hydrolysis of activated Ala-AMP. The other activity is designated 'posttransfer' editing and involves deacylation of mischarged Ala-tRNA(Pro). The misacylated Cys-tRNA(Pro) is not edited by ProRS. This chain is Proline--tRNA ligase, found in Helicobacter pylori (strain ATCC 700392 / 26695) (Campylobacter pylori).